Reading from the N-terminus, the 192-residue chain is Ion-translocating oxidoreductase complex subunit A (192 aa).

A run of 6 helical transmembrane segments spans residues 5–25 (ILLLVGTVLVNNFVLVKFLGL), 39–59 (IGMGLATTFVLTLASVCAYLV), 67–87 (LGIEYLRTMSFILVIAVVVQF), 102–122 (LLGIFLPLITTNCAVLGVALL), 134–154 (IIYGFGAAVGFSLVLILFASM), and 171–191 (SIAMITAGLMSLAFMGFTGLV).

Belongs to the NqrDE/RnfAE family. As to quaternary structure, the complex is composed of six subunits: RnfA, RnfB, RnfC, RnfD, RnfE and RnfG.

The protein localises to the cell inner membrane. In terms of biological role, part of a membrane-bound complex that couples electron transfer with translocation of ions across the membrane. This is Ion-translocating oxidoreductase complex subunit A from Vibrio campbellii (strain ATCC BAA-1116).